A 483-amino-acid polypeptide reads, in one-letter code: Dihydrolipoyllysine-residue acetyltransferase component of pyruvate dehydrogenase complex, mitochondrial (483 aa).

The N-terminal 28 residues, 1–28 (MLSANMLRRMHHGVAVTRMLLVSNGKVQ), are a transit peptide targeting the mitochondrion. The Lipoyl-binding domain occupies 53–129 (HTVINMPALS…PVGKPLAVTV (77 aa)). The residue at position 94 (Lys94) is an N6-lipoyllysine. 2 disordered regions span residues 143–187 (IEDS…DRVF) and 234–254 (EAAAKATTPAASAADAAAPGD). Residues 146–160 (SSAKEPSAKSGEEKS) are compositionally biased toward basic and acidic residues. Polar residues predominate over residues 161-178 (APSSEKQSKETSSPSNVS). The 38-residue stretch at 187 to 224 (FASPLARKLAEEKDLDLSQIRGSGPNGRIIKVDIENFK) folds into the Peripheral subunit-binding (PSBD) domain. Positions 235–252 (AAAKATTPAASAADAAAP) are enriched in low complexity. Residues His456 and Asp460 contribute to the active site.

Belongs to the 2-oxoacid dehydrogenase family. The cofactor is (R)-lipoate.

Its subcellular location is the mitochondrion matrix. It catalyses the reaction N(6)-[(R)-dihydrolipoyl]-L-lysyl-[protein] + acetyl-CoA = N(6)-[(R)-S(8)-acetyldihydrolipoyl]-L-lysyl-[protein] + CoA. In terms of biological role, the pyruvate dehydrogenase complex catalyzes the overall conversion of pyruvate to acetyl-CoA and CO(2). It contains multiple copies of three enzymatic components: pyruvate dehydrogenase (E1), dihydrolipoamide acetyltransferase (E2) and lipoamide dehydrogenase (E3). The polypeptide is Dihydrolipoyllysine-residue acetyltransferase component of pyruvate dehydrogenase complex, mitochondrial (Schizosaccharomyces pombe (strain 972 / ATCC 24843) (Fission yeast)).